Here is a 119-residue protein sequence, read N- to C-terminus: DNA-binding protein Maeo_0998 (119 aa).

Residues 1 to 11 (MDIEEIKRQKM) show a composition bias toward basic and acidic residues. The interval 1 to 36 (MDIEEIKRQKMMELQQQQAQGAPNPEEIQQQQEQER) is disordered. Residues 15-32 (QQQQAQGAPNPEEIQQQQ) show a composition bias toward low complexity.

Belongs to the PDCD5 family.

This Methanococcus aeolicus (strain ATCC BAA-1280 / DSM 17508 / OCM 812 / Nankai-3) protein is DNA-binding protein Maeo_0998.